We begin with the raw amino-acid sequence, 342 residues long: uncharacterized protein (342 aa).

The protein belongs to the cycloisomerase 2 family.

This is an uncharacterized protein from Staphylococcus aureus (strain bovine RF122 / ET3-1).